The sequence spans 264 residues: 3-dehydroquinate dehydratase (264 aa).

Residues 50 to 52 and Arg-86 contribute to the 3-dehydroquinate site; that span reads EWR. The active-site Proton donor/acceptor is the His-148. The active-site Schiff-base intermediate with substrate is the Lys-175. Residues Arg-217, Ser-236, and Gln-240 each contribute to the 3-dehydroquinate site.

This sequence belongs to the type-I 3-dehydroquinase family. In terms of assembly, homodimer.

It catalyses the reaction 3-dehydroquinate = 3-dehydroshikimate + H2O. Its pathway is metabolic intermediate biosynthesis; chorismate biosynthesis; chorismate from D-erythrose 4-phosphate and phosphoenolpyruvate: step 3/7. Functionally, involved in the third step of the chorismate pathway, which leads to the biosynthesis of aromatic amino acids. Catalyzes the cis-dehydration of 3-dehydroquinate (DHQ) and introduces the first double bond of the aromatic ring to yield 3-dehydroshikimate. This chain is 3-dehydroquinate dehydratase, found in Albidiferax ferrireducens (strain ATCC BAA-621 / DSM 15236 / T118) (Rhodoferax ferrireducens).